A 475-amino-acid polypeptide reads, in one-letter code: Ribulose bisphosphate carboxylase large chain (475 aa).

The propeptide occupies 1–2; it reads MS. Pro-3 bears the N-acetylproline mark. Lys-14 carries the post-translational modification N6,N6,N6-trimethyllysine. Substrate is bound by residues Asn-123 and Thr-173. The Proton acceptor role is filled by Lys-175. Lys-177 contributes to the substrate binding site. The Mg(2+) site is built by Lys-201, Asp-203, and Glu-204. Lys-201 bears the N6-carboxylysine mark. Residue His-294 is the Proton acceptor of the active site. Substrate is bound by residues Arg-295, His-327, and Ser-379.

This sequence belongs to the RuBisCO large chain family. Type I subfamily. As to quaternary structure, heterohexadecamer of 8 large chains and 8 small chains; disulfide-linked. The disulfide link is formed within the large subunit homodimers. The cofactor is Mg(2+). The disulfide bond which can form in the large chain dimeric partners within the hexadecamer appears to be associated with oxidative stress and protein turnover.

The protein resides in the plastid. Its subcellular location is the chloroplast. The catalysed reaction is 2 (2R)-3-phosphoglycerate + 2 H(+) = D-ribulose 1,5-bisphosphate + CO2 + H2O. The enzyme catalyses D-ribulose 1,5-bisphosphate + O2 = 2-phosphoglycolate + (2R)-3-phosphoglycerate + 2 H(+). Functionally, ruBisCO catalyzes two reactions: the carboxylation of D-ribulose 1,5-bisphosphate, the primary event in carbon dioxide fixation, as well as the oxidative fragmentation of the pentose substrate in the photorespiration process. Both reactions occur simultaneously and in competition at the same active site. The chain is Ribulose bisphosphate carboxylase large chain from Clarkia xantiana (Gunsight clarkia).